The chain runs to 188 residues: Pyridoxal 5'-phosphate synthase subunit PdxT (188 aa).

Residue 47–49 coordinates L-glutamine; that stretch reads GES. C79 (nucleophile) is an active-site residue. L-glutamine contacts are provided by residues R105 and 134 to 135; that span reads IR. Catalysis depends on charge relay system residues H170 and E172.

It belongs to the glutaminase PdxT/SNO family. In the presence of PdxS, forms a dodecamer of heterodimers. Only shows activity in the heterodimer.

The enzyme catalyses aldehydo-D-ribose 5-phosphate + D-glyceraldehyde 3-phosphate + L-glutamine = pyridoxal 5'-phosphate + L-glutamate + phosphate + 3 H2O + H(+). It carries out the reaction L-glutamine + H2O = L-glutamate + NH4(+). Its pathway is cofactor biosynthesis; pyridoxal 5'-phosphate biosynthesis. Functionally, catalyzes the hydrolysis of glutamine to glutamate and ammonia as part of the biosynthesis of pyridoxal 5'-phosphate. The resulting ammonia molecule is channeled to the active site of PdxS. The polypeptide is Pyridoxal 5'-phosphate synthase subunit PdxT (Listeria monocytogenes serovar 1/2a (strain ATCC BAA-679 / EGD-e)).